Reading from the N-terminus, the 404-residue chain is Type II restriction enzyme EcoRII (404 aa).

The active site involves Tyr-308.

In terms of assembly, homodimer. Mg(2+) is required as a cofactor.

It catalyses the reaction Endonucleolytic cleavage of DNA to give specific double-stranded fragments with terminal 5'-phosphates.. In terms of biological role, an E and P subtype restriction enzyme that recognizes the double-stranded sequence 5'-CCWGG-3' and cleaves before C-1. The protein is Type II restriction enzyme EcoRII (ecoRIIR) of Escherichia coli.